Consider the following 271-residue polypeptide: MTGNEHPIGVFDSGVGGLSVLREIRAVLPHENLLYVADSGHLPYGNKPAEYIEQRALTVGRFLLSRGAKAIVVACNTATAAAITVMRAEFRVPVIGMEPGLKPAVALSKSLVVGVLATEGTLKSAKFRDLVGRTTEKVEVIAQACPGWVEQVERGDLGSPATRDLVRRYTEPALERGADTLVLGCTHYPFLAGLIADVAGPDVHIVETGSAVARHLRRRLEADGLLTRRMAPGVELFWSSGPAEVAGRSLAVLWPGVHRVRPLPAGFAAGD.

Substrate is bound by residues 12–13 and 44–45; these read DS and YG. Cys75 acts as the Proton donor/acceptor in catalysis. 76–77 lines the substrate pocket; the sequence is NT. Catalysis depends on Cys185, which acts as the Proton donor/acceptor. 186 to 187 provides a ligand contact to substrate; sequence TH.

The protein belongs to the aspartate/glutamate racemases family.

It carries out the reaction L-glutamate = D-glutamate. The protein operates within cell wall biogenesis; peptidoglycan biosynthesis. Provides the (R)-glutamate required for cell wall biosynthesis. The chain is Glutamate racemase from Methylococcus capsulatus (strain ATCC 33009 / NCIMB 11132 / Bath).